Consider the following 60-residue polypeptide: Ixodegrin-like peptide (60 aa).

An N-terminal signal peptide occupies residues 1-21 (MNAAFIAALLILGALTLDAMA). The Cell attachment site signature appears at 49-51 (RGD).

Belongs to the ixodegrin family. Contains 3 disulfide bonds. As to expression, expressed in salivary glands.

It localises to the secreted. Its function is as follows. Tick salivary platelet aggregation inhibitor that plays an important part in the anti-hemostatic strategy of ticks. Inhibits platelet aggregation induced by ADP, thrombin and thromboxane A2 (TXA2). Blocks platelet adhesion to soluble collagen (most probably through the binding to alpha-2/beta-1 integrin (ITGA2/ITGB1)) and binds to purified glycoprotein IIb/IIIa (ITGA2B/ITGB3) in a dose-dependent manner. In vivo, reduces thrombus weight effectively in a rat arteriovenous shunt model and inhibits thrombosis in a carrageenan-induced mouse tail thrombosis model. This is Ixodegrin-like peptide from Ixodes scapularis (Black-legged tick).